Here is a 135-residue protein sequence, read N- to C-terminus: Ribosome-binding factor A (135 aa).

The protein belongs to the RbfA family. As to quaternary structure, monomer. Binds 30S ribosomal subunits, but not 50S ribosomal subunits or 70S ribosomes.

It is found in the cytoplasm. Its function is as follows. One of several proteins that assist in the late maturation steps of the functional core of the 30S ribosomal subunit. Associates with free 30S ribosomal subunits (but not with 30S subunits that are part of 70S ribosomes or polysomes). Required for efficient processing of 16S rRNA. May interact with the 5'-terminal helix region of 16S rRNA. The polypeptide is Ribosome-binding factor A (Bartonella tribocorum (strain CIP 105476 / IBS 506)).